We begin with the raw amino-acid sequence, 212 residues long: uncharacterized protein (212 aa).

S-adenosyl-L-methionine-binding residues include Gly53, Glu74, and Asp97.

The protein belongs to the methyltransferase superfamily. YrrT family.

Could be a S-adenosyl-L-methionine-dependent methyltransferase. This is an uncharacterized protein from Bacillus cereus (strain ATCC 14579 / DSM 31 / CCUG 7414 / JCM 2152 / NBRC 15305 / NCIMB 9373 / NCTC 2599 / NRRL B-3711).